A 652-amino-acid polypeptide reads, in one-letter code: Probable L-type lectin-domain containing receptor kinase S.5 (652 aa).

The N-terminal stretch at 1-20 is a signal peptide; it reads MRFSLAWKLLFLILTCKIET. Residues 21-266 lie on the Extracellular side of the membrane; it reads QVKCLKFDFP…EGLKIDGDGN (246 aa). A legume-lectin like region spans residues 24–257; the sequence is CLKFDFPGFN…LNCVRSWSFE (234 aa). 8 N-linked (GlcNAc...) asparagine glycosylation sites follow: Asn33, Asn91, Asn97, Asn100, Asn122, Asn139, Asn201, and Asn244. Residues 267-287 form a helical membrane-spanning segment; the sequence is MLWLWITIPIVFIVGIGAFLG. The Cytoplasmic portion of the chain corresponds to 288 to 652; it reads ALYLRSRSKA…INSLTELTGR (365 aa). The Protein kinase domain occupies 330–622; it reads FGAENKLGQG…PDVPTERPAF (293 aa). ATP contacts are provided by residues 336-344 and Lys357; that span reads LGQGGFGMV. Catalysis depends on Asp455, which acts as the Proton acceptor.

In the C-terminal section; belongs to the protein kinase superfamily. Ser/Thr protein kinase family. The protein in the N-terminal section; belongs to the leguminous lectin family.

Its subcellular location is the cell membrane. The catalysed reaction is L-seryl-[protein] + ATP = O-phospho-L-seryl-[protein] + ADP + H(+). It carries out the reaction L-threonyl-[protein] + ATP = O-phospho-L-threonyl-[protein] + ADP + H(+). This Arabidopsis thaliana (Mouse-ear cress) protein is Probable L-type lectin-domain containing receptor kinase S.5 (LECRKS5).